A 434-amino-acid polypeptide reads, in one-letter code: Methylenetetrahydrofolate--tRNA-(uracil-5-)-methyltransferase TrmFO (434 aa).

Position 8 to 13 (8 to 13) interacts with FAD; it reads GAGLAG.

Belongs to the MnmG family. TrmFO subfamily. The cofactor is FAD.

Its subcellular location is the cytoplasm. The catalysed reaction is uridine(54) in tRNA + (6R)-5,10-methylene-5,6,7,8-tetrahydrofolate + NADH + H(+) = 5-methyluridine(54) in tRNA + (6S)-5,6,7,8-tetrahydrofolate + NAD(+). The enzyme catalyses uridine(54) in tRNA + (6R)-5,10-methylene-5,6,7,8-tetrahydrofolate + NADPH + H(+) = 5-methyluridine(54) in tRNA + (6S)-5,6,7,8-tetrahydrofolate + NADP(+). Catalyzes the folate-dependent formation of 5-methyl-uridine at position 54 (M-5-U54) in all tRNAs. This is Methylenetetrahydrofolate--tRNA-(uracil-5-)-methyltransferase TrmFO from Exiguobacterium sibiricum (strain DSM 17290 / CCUG 55495 / CIP 109462 / JCM 13490 / 255-15).